Reading from the N-terminus, the 368-residue chain is Peptide chain release factor 2 (368 aa).

Residues 36–56 (EAQAGDPSLWDDPDHAQKVTS) are disordered. Glutamine 250 is subject to N5-methylglutamine.

The protein belongs to the prokaryotic/mitochondrial release factor family. Post-translationally, methylated by PrmC. Methylation increases the termination efficiency of RF2.

It localises to the cytoplasm. In terms of biological role, peptide chain release factor 2 directs the termination of translation in response to the peptide chain termination codons UGA and UAA. This chain is Peptide chain release factor 2, found in Corynebacterium aurimucosum (strain ATCC 700975 / DSM 44827 / CIP 107346 / CN-1) (Corynebacterium nigricans).